Here is a 451-residue protein sequence, read N- to C-terminus: MVQNMTYDELILRIIILLRDGKIRDFRSVIDELQPYDMAFIFKEMPEKHRARYLSYLTVDDITDMIGELEREFQLVVLNKVGKTKATLAMNKMDNDDLAQLLEEMDEELKEQLLSSMEASESKAVQLLMNYPADSAGRMMTNRYVWIPQHYTVKDAVVKLKSFAEIAESINYLYVINESKQLVGVLSYRDLILGEPEEKVQDLMFTRVISADALQDQEEVARLIERYDFLAIPVVEENNVLVGIVTVDDIIDVVIREADEDYEKFAASGKDITFDTKAYVAAYRRLPWLILLLFIGLISGSIISYFEDALKQVVALAFFMPMVSGMTGNTGTQSLAVVIRGLSKEEMNKKTIVRLIFREFRTSIFIGAVCSVLIAIVSIIWQGNALLGFVVASSLFLTLIIGTMSGTIIPIILHKLKVDPAIASGPLITTLNDILSLLIYFGIATAFIHSL.

At 1-285 the chain is on the cytoplasmic side; sequence MVQNMTYDEL…TKAYVAAYRR (285 aa). Asp64 and Asp96 together coordinate Mg(2+). 2 CBS domains span residues 140-203 and 204-260; these read MTNR…VQDL and MFTR…EADE. Residues Glu218, Asp228, Asp249, Asp252, Glu257, Glu260, and Asp261 each coordinate Mg(2+). A helical transmembrane segment spans residues 286-306; that stretch reads LPWLILLLFIGLISGSIISYF. At 307-311 the chain is on the extracellular side; it reads EDALK. Residues 312 to 332 traverse the membrane as a helical segment; that stretch reads QVVALAFFMPMVSGMTGNTGT. Residues 333–371 are Cytoplasmic-facing; the sequence is QSLAVVIRGLSKEEMNKKTIVRLIFREFRTSIFIGAVCS. 2 helical membrane-spanning segments follow: residues 372 to 392 and 393 to 413; these read VLIAIVSIIWQGNALLGFVVA and SSLFLTLIIGTMSGTIIPIIL. Over 414–427 the chain is Cytoplasmic; the sequence is HKLKVDPAIASGPL. Mg(2+) is bound by residues Asp419 and Asp433. The chain crosses the membrane as a helical span at residues 428–448; that stretch reads ITTLNDILSLLIYFGIATAFI. Residues 449-451 lie on the Extracellular side of the membrane; sequence HSL.

The protein belongs to the SLC41A transporter family. As to quaternary structure, homodimer.

It localises to the cell membrane. It catalyses the reaction Mg(2+)(in) = Mg(2+)(out). With respect to regulation, binds cyclic di-AMP (c-di-AMP), which may regulate the transporter activity. Its function is as follows. Acts as a magnesium transporter. MgtE is the dominant transporter under rich-medium growth conditions, and it may provide the primary route of magnesium import in B.subtilis, while the other putative transport proteins are likely to be utilized for more-specialized growth conditions. The protein is Magnesium transporter MgtE of Bacillus subtilis (strain 168).